A 300-amino-acid polypeptide reads, in one-letter code: Transcription factor E2F5 (300 aa).

Residues 2–73 mediate DNA binding; it reads GSSRHEKSLG…KNSIQWKGVG (72 aa). The leucine-zipper stretch occupies residues 31-53; sequence LKAAADTLAVRQKRRIYDITNVL. Residues 36–73 carry the DEF box motif; the sequence is DTLAVRQKRRIYDITNVLEGIDLIEKKSKNSIQWKGVG. A dimerization region spans residues 74–170; that stretch reads AGCNTKEVID…GQNGQKKYQI (97 aa). Residues 191 to 250 are disordered; that stretch reads SKPVVFPVPPPDDLTQPSSQSSTSVTPPKSTMAAQNLPEQHVSERSQNFQQTPATEISSG. Over residues 203–221 the composition is skewed to low complexity; the sequence is DLTQPSSQSSTSVTPPKST. Over residues 235-246 the composition is skewed to polar residues; it reads RSQNFQQTPATE. The tract at residues 242 to 300 is transactivation; that stretch reads TPATEISSGSISGDIIDELMSSDVFPLLRLSPTPADDYNFNLDDNEGVCDLFDVQILNY. The RBL2 association stretch occupies residues 277–294; that stretch reads DDYNFNLDDNEGVCDLFD.

Belongs to the E2F/DP family. As to quaternary structure, component of the DRTF1/E2F transcription factor complex. Binds cooperatively with DP-1 to E2F sites. Interaction with retinoblastoma protein RB1 or proteins RBL1 and RBL2 inhibits the E2F transactivation domain. Component of the DREAM complex (also named LINC complex) at least composed of E2F4, E2F5, LIN9, LIN37, LIN52, LIN54, MYBL1, MYBL2, RBL1, RBL2, RBBP4, TFDP1 and TFDP2. The complex exists in quiescent cells where it represses cell cycle-dependent genes. It dissociates in S phase when LIN9, LIN37, LIN52 and LIN54 form a subcomplex that binds to MYBL2. Found in placenta followed by kidney, lung and brain.

The protein localises to the nucleus. Transcriptional activator that binds to E2F sites, these sites are present in the promoter of many genes whose products are involved in cell proliferation. May mediate growth factor-initiated signal transduction. It is likely involved in the early responses of resting cells to growth factor stimulation. Specifically required for multiciliate cell differentiation: together with MCIDAS and E2F5, binds and activate genes required for centriole biogenesis. The protein is Transcription factor E2F5 (E2f5) of Rattus norvegicus (Rat).